Here is a 176-residue protein sequence, read N- to C-terminus: DLNKVFPPEVAVFEPSEAEISHTQKATLVCLATGFFPDHVELSWWVNGKEVHSGVSTDPQPLKEQPALNDSRYCLSSRLRVSATFWQNPRNHFRCQVQFYGLSENDEWTQDRAKPVTQIVSAEAWGRADCGFTSVSYQQGVLSATILYEILLGKATLYAVLVSALVLMAMVKRKDF.

One can recognise an Ig-like C1-type domain in the interval 8–117; sequence PEVAVFEPSE…WTQDRAKPVT (110 aa). Cysteine 30 and cysteine 95 are joined by a disulfide. Asparagine 69 is a glycosylation site (N-linked (GlcNAc...) asparagine). The interval 130 to 144 is connecting peptide; it reads CGFTSVSYQQGVLSA. A helical transmembrane segment spans residues 150–170; sequence ILLGKATLYAVLVSALVLMAM. Topologically, residues 171–176 are cytoplasmic; the sequence is VKRKDF.

As to quaternary structure, alpha-beta TR is a heterodimer composed of an alpha and beta chain; disulfide-linked. The alpha-beta TR is associated with the transmembrane signaling CD3 coreceptor proteins to form the TR-CD3 (TcR or TCR). The assembly of alpha-beta TR heterodimers with CD3 occurs in the endoplasmic reticulum where a single alpha-beta TR heterodimer associates with one CD3D-CD3E heterodimer, one CD3G-CD3E heterodimer and one CD247 homodimer forming a stable octameric structure. CD3D-CD3E and CD3G-CD3E heterodimers preferentially associate with TR alpha and TR beta chains, respectively. The association of the CD247 homodimer is the last step of TcR assembly in the endoplasmic reticulum and is required for transport to the cell surface.

It is found in the cell membrane. Its function is as follows. Constant region of T cell receptor (TR) beta chain. Alpha-beta T cell receptors are antigen specific receptors which are essential to the immune response and are present on the cell surface of T lymphocytes. Recognize peptide-major histocompatibility (MH) (pMH) complexes that are displayed by antigen presenting cells (APC), a prerequisite for efficient T cell adaptive immunity against pathogens. Binding of alpha-beta TR to pMH complex initiates TR-CD3 clustering on the cell surface and intracellular activation of LCK that phosphorylates the ITAM motifs of CD3G, CD3D, CD3E and CD247 enabling the recruitment of ZAP70. In turn, ZAP70 phosphorylates LAT, which recruits numerous signaling molecules to form the LAT signalosome. The LAT signalosome propagates signal branching to three major signaling pathways, the calcium, the mitogen-activated protein kinase (MAPK) kinase and the nuclear factor NF-kappa-B (NF-kB) pathways, leading to the mobilization of transcription factors that are critical for gene expression and essential for T cell growth and differentiation. The T cell repertoire is generated in the thymus, by V-(D)-J rearrangement. This repertoire is then shaped by intrathymic selection events to generate a peripheral T cell pool of self-MH restricted, non-autoaggressive T cells. Post-thymic interaction of alpha-beta TR with the pMH complexes shapes TR structural and functional avidity. The protein is T cell receptor beta constant 1 of Homo sapiens (Human).